A 216-amino-acid polypeptide reads, in one-letter code: uncharacterized protein (216 aa).

The first 17 residues, 1 to 17 (MLKKIIILFLGMFLLSA), serve as a signal peptide directing secretion. Cys18 is lipidated: N-palmitoyl cysteine. A lipid anchor (S-diacylglycerol cysteine) is attached at Cys18. The stretch at 133 to 162 (SDKEKKIQEELNQIKAMLRETKRDISKYTC) forms a coiled coil.

It is found in the cell membrane. This is an uncharacterized protein from Rickettsia conorii (strain ATCC VR-613 / Malish 7).